We begin with the raw amino-acid sequence, 842 residues long: Microcephalin (842 aa).

The BRCT 1 domain maps to 1–93 (MAAPILKDVV…AHIDESLFPA (93 aa)). 4 positions are modified to phosphoserine: Ser-279, Ser-287, Ser-296, and Ser-333. Thr-335 carries the phosphothreonine modification. The segment covering 346–359 (HSRPRSSSVKRKRV) has biased composition (basic residues). Disordered stretches follow at residues 346 to 375 (HSRP…KRKR), 418 to 443 (PDNL…AQFS), and 563 to 624 (VGLK…PTRR). Polar residues-rich tracts occupy residues 434 to 443 (QLPSNPAQFS) and 566 to 582 (KSTQ…NSSE). Residues 586–608 (PSEHEPRSVVDCNVERSAEEKEN) are compositionally biased toward basic and acidic residues. BRCT domains are found at residues 647–737 (SGKG…PFEL) and 758–840 (YRGT…NYLL).

In terms of assembly, interacts with CDC27 and maybe other components of the APC/C complex. Interacts with histone variant H2AX under DNA damage conditions.

It localises to the cytoplasm. Its subcellular location is the cytoskeleton. The protein localises to the microtubule organizing center. The protein resides in the centrosome. Implicated in chromosome condensation and DNA damage induced cellular responses. May play a role in neurogenesis and regulation of the size of the cerebral cortex. The chain is Microcephalin from Macaca fascicularis (Crab-eating macaque).